A 138-amino-acid polypeptide reads, in one-letter code: Phospholipase A2 EC3 (138 aa).

The first 16 residues, 1–16 (MRTLWIVAVWLMGVEG), serve as a signal peptide directing secretion. 7 disulfides stabilise this stretch: C42–C131, C44–C60, C59–C111, C65–C138, C66–C104, C73–C97, and C91–C102. Ca(2+) is bound by residues Y43, G45, and G47. Residue H63 is part of the active site. D64 contacts Ca(2+). D105 is an active-site residue.

It belongs to the phospholipase A2 family. Group II subfamily. Ca(2+) is required as a cofactor.

Its subcellular location is the secreted. The enzyme catalyses a 1,2-diacyl-sn-glycero-3-phosphocholine + H2O = a 1-acyl-sn-glycero-3-phosphocholine + a fatty acid + H(+). Functionally, PA2 catalyzes the calcium-dependent hydrolysis of the 2-acyl groups in 3-sn-phosphoglycerides. The chain is Phospholipase A2 EC3 from Echis coloratus (Carpet viper).